We begin with the raw amino-acid sequence, 204 residues long: Matrix-remodeling-associated protein 7 (204 aa).

Residues 7–27 (LLAALPALATALALLLAWLLV) traverse the membrane as a helical segment. The interval 32 to 148 (AASPEPARAP…FSFKYSPGKL (117 aa)) is disordered. The span at 38–47 (ARAPPEPAPP) shows a compositional bias: pro residues. Residues 63–103 (EPAASPAGPEEPGEPAGLGELGEPAGPGEPEGPGDPAAAPA) show a composition bias toward low complexity. Positions 110–126 (VEARQEEEQDLDGEKGP) are enriched in basic and acidic residues. Ser191 is modified (phosphoserine).

It is found in the membrane. The sequence is that of Matrix-remodeling-associated protein 7 (MXRA7) from Homo sapiens (Human).